We begin with the raw amino-acid sequence, 518 residues long: MARRLLTLLGLLAAAVASPVLWQKDCAKGPEVWCQSLRTASQCGAVKHCQQNVWSKPAVNSIPCDLCKELVTVVGKVLKDNGTEDEIRSYLEKRCEFLPDQGLASECKEIVDSYLPVIMDMIKEEFDKPEVVCSALSLCQSLQKHLAAMKLQKQLQSNKIPELDFSELTSPFMANVPLLLYPQDKPKQKSKATEDVCQDCIRLVTDVQEAVRTNATFVKSLVAHAKEECDRLGPGMSDMCKSYISEYSDLAIQMMMHMKDQQPKDICAMVGFCPSVKSVPLQTLVPAQVVHEVKMETVEKATVQEKTFSVCEICETMVKEVTGLLESNKTEEEIVHEMEVVCYLLPASVKDQCKDFIEVYGQALIDMLLEATNPEAVCVMLKCCAANKPPQQPVVVKPAGGFCDICKMIVAYADKELEKNATTTEIEALLEKVCHFLPESVSDQCVQFVEQYEPVVVQLLAEMMDPTFVCTKLGVCGAAKKPLLGEDACVWGPGYWCKNMETAAQCNAVDHCRRHVWN.

The N-terminal stretch at 1–17 (MARRLLTLLGLLAAAVA) is a signal peptide. Residues 18–60 (SPVLWQKDCAKGPEVWCQSLRTASQCGAVKHCQQNVWSKPAVN) constitute a propeptide that is removed on maturation. Positions 19-59 (PVLWQKDCAKGPEVWCQSLRTASQCGAVKHCQQNVWSKPAV) constitute a Saposin A-type 1 domain. 4 Saposin B-type domains span residues 60–143 (NSIP…QSLQ), 193–277 (TEDV…PSVK), 307–388 (TFSV…AANK), and 399–480 (AGGF…GAAK). Disulfide bonds link Cys-64–Cys-139, Cys-67–Cys-133, and Cys-95–Cys-107. The N-linked (GlcNAc...) asparagine glycan is linked to Asn-81. Residues 144-193 (KHLAAMKLQKQLQSNKIPELDFSELTSPFMANVPLLLYPQDKPKQKSKAT) constitute a propeptide that is removed on maturation. 3 disulfide bridges follow: Cys-197–Cys-273, Cys-200–Cys-267, and Cys-229–Cys-240. Asn-214 is a glycosylation site (N-linked (GlcNAc...) asparagine). The propeptide occupies 277–306 (KSVPLQTLVPAQVVHEVKMETVEKATVQEK). Disulfide bonds link Cys-311–Cys-384, Cys-314–Cys-378, and Cys-342–Cys-353. An N-linked (GlcNAc...) asparagine glycan is attached at Asn-328. Residues 388-398 (KPPQQPVVVKP) constitute a propeptide that is removed on maturation. Cystine bridges form between Cys-403-Cys-476, Cys-406-Cys-470, and Cys-434-Cys-445. The N-linked (GlcNAc...) asparagine glycan is linked to Asn-420. A propeptide spanning residues 480–518 (KKPLLGEDACVWGPGYWCKNMETAAQCNAVDHCRRHVWN) is cleaved from the precursor. In terms of domain architecture, Saposin A-type 2 spans 482–518 (PLLGEDACVWGPGYWCKNMETAAQCNAVDHCRRHVWN).

In terms of assembly, saposin-B is a homodimer. This precursor is proteolytically processed to 4 small peptides, which are similar to each other and are sphingolipid hydrolase activator proteins.

The protein resides in the lysosome. Its subcellular location is the secreted. Its function is as follows. The lysosomal degradation of sphingolipids takes place by the sequential action of specific hydrolases. Some of these enzymes require specific low-molecular mass, non-enzymatic proteins: the sphingolipids activator proteins (coproteins). In terms of biological role, saposin-A and saposin-C stimulate the hydrolysis of glucosylceramide by beta-glucosylceramidase (EC 3.2.1.45) and galactosylceramide by beta-galactosylceramidase (EC 3.2.1.46). Saposin-C apparently acts by combining with the enzyme and acidic lipid to form an activated complex, rather than by solubilizing the substrate. Saposin-B stimulates the hydrolysis of galacto-cerebroside sulfate by arylsulfatase A (EC 3.1.6.8), GM1 gangliosides by beta-galactosidase (EC 3.2.1.23) and globotriaosylceramide by alpha-galactosidase A (EC 3.2.1.22). Saposin-B forms a solubilizing complex with the substrates of the sphingolipid hydrolases. Functionally, saposin-D is a specific sphingomyelin phosphodiesterase activator (EC 3.1.4.12). In Gallus gallus (Chicken), this protein is Prosaposin (PSAP).